A 262-amino-acid polypeptide reads, in one-letter code: Outer membrane protein assembly factor BamD (262 aa).

Positions 1–18 are cleaved as a signal peptide; sequence MRKIKSLALLAVAALVIG. A lipid anchor (N-palmitoyl cysteine) is attached at cysteine 19. The S-diacylglycerol cysteine moiety is linked to residue cysteine 19.

Belongs to the BamD family. As to quaternary structure, part of the Bam complex.

Its subcellular location is the cell outer membrane. Functionally, part of the outer membrane protein assembly complex, which is involved in assembly and insertion of beta-barrel proteins into the outer membrane. This Haemophilus influenzae (strain ATCC 51907 / DSM 11121 / KW20 / Rd) protein is Outer membrane protein assembly factor BamD.